The chain runs to 88 residues: Insertion element ISR1 uncharacterized 10 kDa protein A3 (88 aa).

It belongs to the transposase 8 family.

In Rhizobium sp, this protein is Insertion element ISR1 uncharacterized 10 kDa protein A3.